The sequence spans 286 residues: ATP synthase gamma chain (286 aa).

The protein belongs to the ATPase gamma chain family. As to quaternary structure, F-type ATPases have 2 components, CF(1) - the catalytic core - and CF(0) - the membrane proton channel. CF(1) has five subunits: alpha(3), beta(3), gamma(1), delta(1), epsilon(1). CF(0) has three main subunits: a, b and c.

It is found in the cell inner membrane. Produces ATP from ADP in the presence of a proton gradient across the membrane. The gamma chain is believed to be important in regulating ATPase activity and the flow of protons through the CF(0) complex. This chain is ATP synthase gamma chain, found in Shewanella sp. (strain ANA-3).